The chain runs to 467 residues: Ribulose bisphosphate carboxylase large chain (467 aa).

Residues X106 and T156 each coordinate substrate. The active-site Proton acceptor is the K158. K160 is a substrate binding site. Residues K184, D186, and E187 each coordinate Mg(2+). At K184 the chain carries N6-carboxylysine. The Proton acceptor role is filled by H276. The substrate site is built by R277, H309, and S361.

It belongs to the RuBisCO large chain family. Type I subfamily. As to quaternary structure, heterohexadecamer of 8 large chains and 8 small chains. Mg(2+) is required as a cofactor.

It localises to the plastid. The protein resides in the chloroplast. It carries out the reaction 2 (2R)-3-phosphoglycerate + 2 H(+) = D-ribulose 1,5-bisphosphate + CO2 + H2O. The enzyme catalyses D-ribulose 1,5-bisphosphate + O2 = 2-phosphoglycolate + (2R)-3-phosphoglycerate + 2 H(+). In terms of biological role, ruBisCO catalyzes two reactions: the carboxylation of D-ribulose 1,5-bisphosphate, the primary event in carbon dioxide fixation, as well as the oxidative fragmentation of the pentose substrate in the photorespiration process. Both reactions occur simultaneously and in competition at the same active site. This is Ribulose bisphosphate carboxylase large chain (rbcL) from Chondrus crispus (Carrageen Irish moss).